Here is a 437-residue protein sequence, read N- to C-terminus: tRNA-queuosine alpha-mannosyltransferase (437 aa).

The protein belongs to the glycosyltransferase group 1 family. Glycosyltransferase 4 subfamily.

It localises to the cytoplasm. It is found in the nucleus. It carries out the reaction queuosine(34) in tRNA(Asp) + GDP-alpha-D-mannose = O-4''-alpha-D-mannosylqueuosine(34) in tRNA(Asp) + GDP + H(+). Glycosyltransferase that specifically catalyzes mannosylation of cytoplasmic tRNA(Asp) modified with queuosine at position 34 (queuosine(34)). Mannosylates the cyclopentene moiety of queuosine(34) in tRNA(Asp) to form mannosyl-queuosine(34). Mannosylation of queuosine(34) in tRNA(Asp) is required to slow-down elongation at cognate codons, GAC and GAU, thereby regulating protein translation. The sequence is that of tRNA-queuosine alpha-mannosyltransferase (gtdc1) from Xenopus tropicalis (Western clawed frog).